Here is a 916-residue protein sequence, read N- to C-terminus: Calcium homeostasis endoplasmic reticulum protein (916 aa).

M1 carries the N-acetylmethionine modification. Residues 15 to 57 (VIDKLAQFVARNGPEFEKMTMEKQKDNPKFSFLFGGEFYSYYK) form an SURP motif repeat. K18 is modified (N6-acetyllysine). The CID domain maps to 149–289 (ETQLDMNEFD…QLQSPALGLG (141 aa)). Disordered stretches follow at residues 336 to 549 (QQQQ…RFPP) and 601 to 635 (HPPW…PHIN). Residues 354-374 (TPPPPAPPPAPAPAPAIPPTT) show a composition bias toward pro residues. A compositionally biased stretch (polar residues) spans 480-501 (WNNQPDAAWNSQFEGPWNSQHE). Pro residues predominate over residues 525 to 541 (PFPPHQQHPQFNQPPHP). Y714 is modified (phosphotyrosine). Residues 722–878 (RARRRKGQEK…DPIKGGDVRD (157 aa)) are disordered. Positions 739–749 (SRSRSKSRGRS) are enriched in basic residues. Positions 750 to 766 (SSRSNSRSSKSSGSYSR) are enriched in low complexity. Residues 767–815 (SRSRSCSRSYSRSRSRSRSRSRSSRSRSRSQSRSRSKSYSPGRRRRSRS) are compositionally biased toward basic residues. Phosphoserine is present on residues S813, S815, and S817. T819 is subject to Phosphothreonine. Phosphoserine is present on S828. Residues 841-891 (EENKGHQMLVKMGWSGSGGLGAKEQGIQDPIKGGDVRDKWDQYKGVGVALD) enclose the G-patch domain. A Glycyl lysine isopeptide (Lys-Gly) (interchain with G-Cter in SUMO2) cross-link involves residue K844. Phosphoserine is present on residues S855 and S857. A Glycyl lysine isopeptide (Lys-Gly) (interchain with G-Cter in SUMO2) cross-link involves residue K872. An N6-acetyllysine modification is found at K879. Phosphoserine is present on S904.

In terms of tissue distribution, expressed in brain, placenta, lung, liver, kidney, pancreas, cardiac and skeletal muscle, and in cultured HEL and Dami cells.

It localises to the cytoplasm. It is found in the perinuclear region. The protein localises to the endoplasmic reticulum. Functionally, involved in calcium homeostasis, growth and proliferation. The protein is Calcium homeostasis endoplasmic reticulum protein of Homo sapiens (Human).